Reading from the N-terminus, the 469-residue chain is UDP-N-acetylmuramate--L-alanine ligase (469 aa).

122-128 (GTHGKTT) serves as a coordination point for ATP.

It belongs to the MurCDEF family.

It is found in the cytoplasm. It catalyses the reaction UDP-N-acetyl-alpha-D-muramate + L-alanine + ATP = UDP-N-acetyl-alpha-D-muramoyl-L-alanine + ADP + phosphate + H(+). It functions in the pathway cell wall biogenesis; peptidoglycan biosynthesis. Its function is as follows. Cell wall formation. The protein is UDP-N-acetylmuramate--L-alanine ligase of Legionella pneumophila (strain Paris).